Here is a 350-residue protein sequence, read N- to C-terminus: Ion-translocating oxidoreductase complex subunit D (350 aa).

The next 5 membrane-spanning stretches (helical) occupy residues 19-39, 41-61, 67-87, 88-108, and 122-142; these read LMLL…WFFG, GTLI…ALVL, PVKP…IGLS, LPPL…IIIA, and PAMV…TSWL. T186 is modified (FMN phosphoryl threonine). A run of 4 helical transmembrane segments spans residues 213 to 233, 242 to 262, 264 to 284, and 299 to 316; these read WGGI…LFLL, IPGA…LMTP, ATAT…AFFI, and LVYG…RRFG.

The protein belongs to the NqrB/RnfD family. As to quaternary structure, the complex is composed of six subunits: RnfA, RnfB, RnfC, RnfD, RnfE and RnfG. The cofactor is FMN.

It localises to the cell inner membrane. Its function is as follows. Part of a membrane-bound complex that couples electron transfer with translocation of ions across the membrane. This Aeromonas hydrophila subsp. hydrophila (strain ATCC 7966 / DSM 30187 / BCRC 13018 / CCUG 14551 / JCM 1027 / KCTC 2358 / NCIMB 9240 / NCTC 8049) protein is Ion-translocating oxidoreductase complex subunit D.